The primary structure comprises 720 residues: Catalase-peroxidase (720 aa).

The signal sequence occupies residues 1-21; it reads MSENKCPVMHGSATTTENSMA. The tryptophyl-tyrosyl-methioninium (Trp-Tyr) (with M-248) cross-link spans 94-222; that stretch reads WHAAGTYRIA…LAAVMMGLIY (129 aa). His-95 (proton acceptor) is an active-site residue. The segment at residues 222-248 is a cross-link (tryptophyl-tyrosyl-methioninium (Tyr-Met) (with W-94)); it reads YVNPEGVDGKPDPLKTAQDIRETFARM. His-263 is a binding site for heme b.

The protein belongs to the peroxidase family. Peroxidase/catalase subfamily. As to quaternary structure, homodimer or homotetramer. The cofactor is heme b. Post-translationally, formation of the three residue Trp-Tyr-Met cross-link is important for the catalase, but not the peroxidase activity of the enzyme.

It catalyses the reaction H2O2 + AH2 = A + 2 H2O. It carries out the reaction 2 H2O2 = O2 + 2 H2O. In terms of biological role, bifunctional enzyme with both catalase and broad-spectrum peroxidase activity. The chain is Catalase-peroxidase from Shewanella denitrificans (strain OS217 / ATCC BAA-1090 / DSM 15013).